We begin with the raw amino-acid sequence, 154 residues long: ORF3b protein (154 aa).

The interval leucine 80 to lysine 138 is mitochondrial targeting signal. The interval cysteine 134 to arginine 154 is nucleolar targeting. Residues lysine 135 to valine 153 carry the Bipartite nuclear localization signal motif.

As to quaternary structure, interacts with host RUNX1 isoform b.

It is found in the host nucleus. Its subcellular location is the host nucleolus. The protein localises to the host mitochondrion. Its function is as follows. Induces host cell G0/G1 arrest and apoptosis. This chain is ORF3b protein, found in Homo sapiens (Human).